A 309-amino-acid chain; its full sequence is Probable porphobilinogen deaminase (309 aa).

Cys-233 is modified (S-(dipyrrolylmethanemethyl)cysteine).

This sequence belongs to the HMBS family. It depends on dipyrromethane as a cofactor.

It carries out the reaction 4 porphobilinogen + H2O = hydroxymethylbilane + 4 NH4(+). It participates in porphyrin-containing compound metabolism; protoporphyrin-IX biosynthesis; coproporphyrinogen-III from 5-aminolevulinate: step 2/4. Tetrapolymerization of the monopyrrole PBG into the hydroxymethylbilane pre-uroporphyrinogen in several discrete steps. The protein is Probable porphobilinogen deaminase of Methanococcoides burtonii (strain DSM 6242 / NBRC 107633 / OCM 468 / ACE-M).